The chain runs to 447 residues: Phosphoglucosamine mutase (447 aa).

Ser101 serves as the catalytic Phosphoserine intermediate. 4 residues coordinate Mg(2+): Ser101, Asp242, Asp244, and Asp246. The residue at position 101 (Ser101) is a Phosphoserine.

This sequence belongs to the phosphohexose mutase family. Mg(2+) is required as a cofactor. Post-translationally, activated by phosphorylation.

It catalyses the reaction alpha-D-glucosamine 1-phosphate = D-glucosamine 6-phosphate. In terms of biological role, catalyzes the conversion of glucosamine-6-phosphate to glucosamine-1-phosphate. This chain is Phosphoglucosamine mutase, found in Methylobacterium radiotolerans (strain ATCC 27329 / DSM 1819 / JCM 2831 / NBRC 15690 / NCIMB 10815 / 0-1).